The following is a 201-amino-acid chain: Potassium-transporting ATPase KdpC subunit (201 aa).

The chain crosses the membrane as a helical span at residues 9–29 (ILVMLALTLITGLLYPLAMTV). Composition is skewed to polar residues over residues 73–84 (TTAADPNDSTKT) and 91–101 (AANSSGSNLGP). Residues 73 to 103 (TTAADPNDSTKTVPAPYNAANSSGSNLGPTS) are disordered.

Belongs to the KdpC family. As to quaternary structure, the system is composed of three essential subunits: KdpA, KdpB and KdpC.

The protein resides in the cell inner membrane. Part of the high-affinity ATP-driven potassium transport (or Kdp) system, which catalyzes the hydrolysis of ATP coupled with the electrogenic transport of potassium into the cytoplasm. This subunit acts as a catalytic chaperone that increases the ATP-binding affinity of the ATP-hydrolyzing subunit KdpB by the formation of a transient KdpB/KdpC/ATP ternary complex. This is Potassium-transporting ATPase KdpC subunit from Bradyrhizobium sp. (strain BTAi1 / ATCC BAA-1182).